A 291-amino-acid polypeptide reads, in one-letter code: Elongation factor Ts, mitochondrial (291 aa).

It belongs to the EF-Ts family.

It localises to the mitochondrion. Associates with the EF-Tu.GDP complex and induces the exchange of GDP to GTP. It remains bound to the aminoacyl-tRNA.EF-Tu.GTP complex up to the GTP hydrolysis stage on the ribosome. The protein is Elongation factor Ts, mitochondrial of Nematostella vectensis (Starlet sea anemone).